The chain runs to 807 residues: Zinc finger protein 594 (807 aa).

The interval 1 to 23 (MKEWKSKMEISEEKKSARAASEK) is disordered. 8 C2H2-type zinc fingers span residues 127 to 149 (YECK…QRIH), 155 to 177 (YVCN…QRIH), 183 to 205 (YICH…KQIH), 211 to 233 (YECK…QRIH), 239 to 261 (YLCN…HRIH), 267 to 289 (YECY…QRIH), 295 to 317 (LKCN…QRLH), and 323 to 345 (YECH…QRLH). Residues 348 to 370 (EKIEECEKTFSKDEELREEQRIH) form a C2H2-type 9; degenerate zinc finger. 6 consecutive C2H2-type zinc fingers follow at residues 376–398 (YWCN…QVTH), 404–426 (YECK…HRIH), 432–454 (CVCS…HRVH), 460–482 (YECS…QKIH), 488–510 (YQCT…RRIH), and 516–538 (YECK…QSLH). The segment at 543–562 (LECEKTFSQDEELRGEQKIH) adopts a C2H2-type 16; degenerate zinc-finger fold. 6 C2H2-type zinc fingers span residues 568-590 (YWCN…QVTH), 596-618 (YECK…HRIH), 624-646 (YVCN…HRIH), 652-674 (YECS…QKIH), 680-702 (YQCS…RRLH), and 708-730 (YECK…QRLH). The segment at 733–755 (EKLEECEKTFSKDEELRKEQRTH) adopts a C2H2-type 23; degenerate zinc-finger fold. The C2H2-type 24 zinc-finger motif lies at 761–783 (YWCNQCSRTFQGSSDLIRHQVTH).

Belongs to the krueppel C2H2-type zinc-finger protein family.

The protein resides in the nucleus. May be involved in transcriptional regulation. The protein is Zinc finger protein 594 (ZNF594) of Homo sapiens (Human).